The sequence spans 521 residues: Glutamyl-tRNA(Gln) amidotransferase subunit A, mitochondrial (521 aa).

Active-site charge relay system residues include K61 and S139. Residue S163 is the Acyl-ester intermediate of the active site.

The protein belongs to the amidase family. GatA subfamily. As to quaternary structure, subunit of the heterotrimeric GatCAB amidotransferase (AdT) complex, composed of A, B and C subunits.

The protein localises to the mitochondrion. It carries out the reaction L-glutamyl-tRNA(Gln) + L-glutamine + ATP + H2O = L-glutaminyl-tRNA(Gln) + L-glutamate + ADP + phosphate + H(+). Functionally, allows the formation of correctly charged Gln-tRNA(Gln) through the transamidation of misacylated Glu-tRNA(Gln) in the mitochondria. The reaction takes place in the presence of glutamine and ATP through an activated gamma-phospho-Glu-tRNA(Gln). The sequence is that of Glutamyl-tRNA(Gln) amidotransferase subunit A, mitochondrial from Ajellomyces capsulatus (strain G186AR / H82 / ATCC MYA-2454 / RMSCC 2432) (Darling's disease fungus).